The primary structure comprises 1479 residues: WASH complex subunit 2 (1479 aa).

Residues 1–17 (MPEEQPQQQQQPVREQP) are compositionally biased toward low complexity. Disordered regions lie at residues 1 to 25 (MPEE…DVPW), 188 to 210 (GGLV…TEKK), 240 to 564 (FIED…GGVK), 576 to 1383 (FSGK…FDDI), and 1419 to 1479 (TSTT…NLFD). The span at 242–279 (EDSDSDSSDEEDEEDVDAEDGSDESSSESSSDDDDEKD) shows a compositional bias: acidic residues. Residues 334-349 (SKKSSNSYTSSLSDIL) show a composition bias toward low complexity. Residues 422–431 (DDDLFGDSEE) are compositionally biased toward acidic residues. 2 stretches are compositionally biased toward low complexity: residues 465-475 (TTTSSQPQQKK) and 514-532 (TPKP…TTTK). The residue at position 535 (T535) is a Phosphothreonine. The segment covering 542-552 (ASGSESTTGKS) has biased composition (polar residues). Positions 595–620 (TESKASEDDFFSSDKKSTSATKKDAE) are enriched in basic and acidic residues. Low complexity predominate over residues 709–723 (PKAPTTATTTTTTKP). Residues 765–781 (TETKKQPITEEPKKKQD) show a composition bias toward basic and acidic residues. The segment covering 802–814 (ASISPASPVSTIE) has biased composition (polar residues). Residues 839-885 (DLTKDEPAKSEPTKVEPTKVEPTKAEPTKVEPAKVEPTKVESDKKES) show a composition bias toward basic and acidic residues. Polar residues predominate over residues 904–916 (KNPTTSSSTTATE). Over residues 951-968 (SSTTKKSTTTTTTTTSSK) the composition is skewed to low complexity. The span at 981-990 (KKVEEKKSSD) shows a compositional bias: basic and acidic residues. Low complexity-rich tracts occupy residues 991-1000 (FDSFFSGSDD) and 1010-1021 (KTTTTPPLTSTT). The segment covering 1062–1075 (PLTSNNTKNRTKSI) has biased composition (polar residues). A compositionally biased stretch (basic and acidic residues) spans 1091-1107 (EKNRSESPTSEKAEPTK). The span at 1108–1123 (KTSNISSLQNKLSLNP) shows a compositional bias: polar residues. The segment covering 1147 to 1162 (STNNDNDSSATDLSDS) has biased composition (low complexity). Composition is skewed to polar residues over residues 1163 to 1174 (GRSSPSVTSPTL) and 1220 to 1236 (KSGT…TPTQ). At S1249 the chain carries Phosphoserine. Over residues 1277 to 1292 (EKTSSGKSSPSPTIKS) the composition is skewed to low complexity. A compositionally biased stretch (polar residues) spans 1307 to 1317 (ASTTTKPTASE). The segment covering 1327-1358 (KKSEPETPKETPKETPKEKEQTKEKEQPKETP) has biased composition (basic and acidic residues). Low complexity-rich tracts occupy residues 1419–1445 (TSTT…AVDN) and 1452–1466 (NTTT…TPSK).

This sequence belongs to the FAM21 family. Probable component of the WASH complex.

The polypeptide is WASH complex subunit 2 (Dictyostelium discoideum (Social amoeba)).